The following is a 594-amino-acid chain: Glutamate decarboxylase 1 (594 aa).

The segment covering 1 to 13 has biased composition (low complexity); the sequence is MASSTPSSSATSS. The tract at residues 1–23 is disordered; it reads MASSTPSSSATSSNAGADPNTTN. Serine 78 carries the post-translational modification Phosphoserine. 190 to 192 contributes to the 4-aminobutanoate binding site; the sequence is QLS. Position 405 is an N6-(pyridoxal phosphate)lysine (lysine 405). Arginine 567 serves as a coordination point for 4-aminobutanoate.

The protein belongs to the group II decarboxylase family. As to quaternary structure, homodimer. It depends on pyridoxal 5'-phosphate as a cofactor.

The enzyme catalyses L-glutamate + H(+) = 4-aminobutanoate + CO2. Its function is as follows. Catalyzes the synthesis of the inhibitory neurotransmitter gamma-aminobutyric acid (GABA) with pyridoxal 5'-phosphate as cofactor. The chain is Glutamate decarboxylase 1 (GAD1) from Felis catus (Cat).